The following is a 225-amino-acid chain: UPF0758 protein XCV4028 (225 aa).

The region spanning 102–224 (ALSDPPSVGR…PVSFAERGWL (123 aa)) is the MPN domain. His173, His175, and Asp186 together coordinate Zn(2+). The JAMM motif motif lies at 173–186 (HNHPSGNPEPSEAD).

This sequence belongs to the UPF0758 family.

In Xanthomonas euvesicatoria pv. vesicatoria (strain 85-10) (Xanthomonas campestris pv. vesicatoria), this protein is UPF0758 protein XCV4028.